A 403-amino-acid chain; its full sequence is Argininosuccinate synthase 1 (403 aa).

ATP contacts are provided by residues 10–18 (SYSGGLDTS) and A37. Y88 and S93 together coordinate L-citrulline. G118 lines the ATP pocket. L-aspartate-binding residues include T120, N124, and D125. Residue N124 coordinates L-citrulline. The L-citrulline site is built by R128, S179, S188, E264, and Y276.

Belongs to the argininosuccinate synthase family. Type 1 subfamily. In terms of assembly, homotetramer.

Its subcellular location is the cytoplasm. The catalysed reaction is L-citrulline + L-aspartate + ATP = 2-(N(omega)-L-arginino)succinate + AMP + diphosphate + H(+). The protein operates within amino-acid biosynthesis; L-arginine biosynthesis; L-arginine from L-ornithine and carbamoyl phosphate: step 2/3. This is Argininosuccinate synthase 1 from Rhizobium johnstonii (strain DSM 114642 / LMG 32736 / 3841) (Rhizobium leguminosarum bv. viciae).